A 299-amino-acid chain; its full sequence is N-acetylmuramic acid 6-phosphate etherase (299 aa).

The 164-residue stretch at Thr-54–Lys-217 folds into the SIS domain. Catalysis depends on Glu-82, which acts as the Proton donor. Glu-113 is a catalytic residue.

It belongs to the GCKR-like family. MurNAc-6-P etherase subfamily. As to quaternary structure, homodimer.

It carries out the reaction N-acetyl-D-muramate 6-phosphate + H2O = N-acetyl-D-glucosamine 6-phosphate + (R)-lactate. It functions in the pathway amino-sugar metabolism; N-acetylmuramate degradation. Functionally, specifically catalyzes the cleavage of the D-lactyl ether substituent of MurNAc 6-phosphate, producing GlcNAc 6-phosphate and D-lactate. The polypeptide is N-acetylmuramic acid 6-phosphate etherase (Staphylococcus aureus (strain USA300)).